Here is a 193-residue protein sequence, read N- to C-terminus: Protein B4 (193 aa).

Helical transmembrane passes span 15 to 35 (FFVCIFLCVFFCVCIFLCVFF), 36 to 56 (CVYFFVCVFFCVCFFVCVFFV), and 160 to 180 (LSLCGSAFCLSFSLARAIVFS).

It localises to the host membrane. The chain is Protein B4 (B4) from Homo sapiens (Human).